A 1157-amino-acid chain; its full sequence is Probable inactive leucine-rich repeat receptor kinase XIAO (1157 aa).

The signal sequence occupies residues 1-21; the sequence is MPPPPRLLFLLVMLLVVAAPG. A glycan (N-linked (GlcNAc...) asparagine) is linked at asparagine 58. LRR repeat units follow at residues 101 to 125, 127 to 149, 150 to 172, 173 to 196, 198 to 220, 221 to 245, 247 to 269, 270 to 293, 296 to 319, 320 to 343, 344 to 367, 368 to 391, 393 to 414, 415 to 439, 440 to 463, 464 to 487, 489 to 511, 513 to 536, 537 to 559, 561 to 583, 584 to 608, 609 to 631, 632 to 656, 658 to 680, 681 to 704, and 706 to 728; these read LVYL…LSRI, SLRA…FLAN, LTNL…VSFP, PSLK…VSAS, TSLQ…SLGT, LQDL…LSNC, ALLH…VAAI, PSLQ…AFGG, NSSL…VSLG, KDLQ…LAGA, GGLT…VGQL, TALQ…IGRC, ALQV…ALGG, LRRL…LGNL, SWLE…LFVL, GNLT…IGNL, ALQS…IGNL, NLRV…LFGL, PQLQ…GFSS, WSLR…TYGY, LPSL…LANC, SNLT…DFAR, LGEL…ISNC, SLVT…LSNL, SKLQ…LAQI, and GMLS…LGSR. N-linked (GlcNAc...) asparagine glycosylation occurs at asparagine 149. N-linked (GlcNAc...) asparagine glycosylation is found at asparagine 192, asparagine 204, and asparagine 244. Asparagine 296 is a glycosylation site (N-linked (GlcNAc...) asparagine). N-linked (GlcNAc...) asparagine glycosylation is present at asparagine 438. Asparagine 465, asparagine 494, and asparagine 524 each carry an N-linked (GlcNAc...) asparagine glycan. N-linked (GlcNAc...) asparagine glycans are attached at residues asparagine 567, asparagine 607, asparagine 610, asparagine 655, asparagine 679, asparagine 692, and asparagine 711. Residues 765–785 traverse the membrane as a helical segment; sequence LALLIGVVAATVLLLVLFCCC. The disordered stretch occupies residues 804-825; the sequence is VKKRRRSPGRGSGSSGTSTDSV. The Protein kinase domain maps to 849-1144; the sequence is FDEENVLSRG…LEGCRVGPDI (296 aa). Residues 855–863, 930–932, 936–939, 980–985, and aspartate 998 each bind ATP; these read LSRGRHGLV, DYM, NLAT, and DVKPQN.

The protein belongs to the protein kinase superfamily. Ser/Thr protein kinase family. As to expression, expressed in developing culm, coleoptile, primary root, young spikelet, young leaf blade and leaf sheath, floral meristem primordia, stamen primordia, and lemma and palea primordia.

It localises to the cell membrane. Functions in the early stages of organ development by regulating cell division rate. Is probably involved in the regulation of a number of cell-cycle genes. May act as regulator of brassinosteroid (BR) signaling and cell-cycle controlling organ growth. This chain is Probable inactive leucine-rich repeat receptor kinase XIAO, found in Oryza sativa subsp. japonica (Rice).